The primary structure comprises 172 residues: Translation initiation factor IF-3 (172 aa).

Belongs to the IF-3 family. Monomer.

The protein resides in the cytoplasm. Its function is as follows. IF-3 binds to the 30S ribosomal subunit and shifts the equilibrium between 70S ribosomes and their 50S and 30S subunits in favor of the free subunits, thus enhancing the availability of 30S subunits on which protein synthesis initiation begins. This Campylobacter fetus subsp. fetus (strain 82-40) protein is Translation initiation factor IF-3.